The chain runs to 255 residues: Triosephosphate isomerase (255 aa).

Residue 10–12 participates in substrate binding; sequence NWK. His-96 (electrophile) is an active-site residue. Catalysis depends on Glu-169, which acts as the Proton acceptor. Residues Gly-175, Ser-214, and 235–236 contribute to the substrate site; that span reads GG.

It belongs to the triosephosphate isomerase family. Homodimer.

The protein localises to the cytoplasm. The catalysed reaction is D-glyceraldehyde 3-phosphate = dihydroxyacetone phosphate. The protein operates within carbohydrate biosynthesis; gluconeogenesis. It participates in carbohydrate degradation; glycolysis; D-glyceraldehyde 3-phosphate from glycerone phosphate: step 1/1. Functionally, involved in the gluconeogenesis. Catalyzes stereospecifically the conversion of dihydroxyacetone phosphate (DHAP) to D-glyceraldehyde-3-phosphate (G3P). This chain is Triosephosphate isomerase, found in Coxiella burnetii (strain Dugway 5J108-111).